A 471-amino-acid polypeptide reads, in one-letter code: Proline--tRNA ligase (471 aa).

Belongs to the class-II aminoacyl-tRNA synthetase family. ProS type 3 subfamily. In terms of assembly, homodimer.

The protein localises to the cytoplasm. The enzyme catalyses tRNA(Pro) + L-proline + ATP = L-prolyl-tRNA(Pro) + AMP + diphosphate. Catalyzes the attachment of proline to tRNA(Pro) in a two-step reaction: proline is first activated by ATP to form Pro-AMP and then transferred to the acceptor end of tRNA(Pro). In Archaeoglobus fulgidus (strain ATCC 49558 / DSM 4304 / JCM 9628 / NBRC 100126 / VC-16), this protein is Proline--tRNA ligase.